The following is a 204-amino-acid chain: MTKVKICGITTLEDALMAVEAGADALGFVFFEKSPRYIGPEAAARIIRELPPFVQVVGLFVDAELDFVNRTADTCGLDLVQLHGEESPAYCGLVRRRVMKAFRVRGPESLAALPDYKVSAYLLDAYSPASHGGTGERFDWEHAVAAKGEGRIVLAGGLDPDNVAQAVAKVAPYAVDVSSGVELSPGRKDREKVRRFVAEAKKLS.

This sequence belongs to the TrpF family.

It carries out the reaction N-(5-phospho-beta-D-ribosyl)anthranilate = 1-(2-carboxyphenylamino)-1-deoxy-D-ribulose 5-phosphate. It functions in the pathway amino-acid biosynthesis; L-tryptophan biosynthesis; L-tryptophan from chorismate: step 3/5. In Geobacter sp. (strain M21), this protein is N-(5'-phosphoribosyl)anthranilate isomerase.